A 572-amino-acid polypeptide reads, in one-letter code: MKTSLQIAAEAHLEPIGVIAERLGLPTEYLEPYGRYRGKIDLTFLDDHANRPRGRYILVSAITPTPLGEGKTTTAIGLAMALNRIGKRAVVTLRQSSLGPVFGIKGGGAGGGYSQIVPLAESILHLNGDIHAVSQAHNQLAALTDNSWYHGNPLDIDPDRIEIRRVVDVNDRFLRQVMIGLGGKQNGFPRQTGFDISVASELMAILAMVSGAGAKAALRELRARIGRMVVAFRRDGTPVTAEDVRGAGAATVLMREALKPNLMQTIENTPALIHAGPFANIAQGNSSILADLVALRCAEYTITEAGFGADIGAEKFFNLKCRAGGLWPDAAVIVATVRALKAHSGKYEIVAGKPLPVALLQENPDDVFAGGDNLRRQIANITQFGVPVVVALNTYPEDTATEIEAVAQIATAAGAVGMAVSNVYAAGGAGGVELAKLVARVTERPGPREPKYLYPLEMPLAEKIEVIARRIYGAAGIELSATAAAQLATLTEAGFGNLPICMVKTHLSLSHDPKLRGAPAGFIFPIREVRISAGAGFILPIAGTTVTMPGLGAHPAAHQVDIDDDGNIVGLF.

65–72 (TPLGEGKT) contacts ATP.

The protein belongs to the formate--tetrahydrofolate ligase family.

The enzyme catalyses (6S)-5,6,7,8-tetrahydrofolate + formate + ATP = (6R)-10-formyltetrahydrofolate + ADP + phosphate. Its pathway is one-carbon metabolism; tetrahydrofolate interconversion. This is Formate--tetrahydrofolate ligase from Chloroflexus aggregans (strain MD-66 / DSM 9485).